The sequence spans 296 residues: Putative ankyrin repeat protein FPV216 (296 aa).

ANK repeat units follow at residues 73 to 102 (SYVNPLIYAIECDNHDAILSLIRYGADVNT) and 107 to 136 (LVITPLYISVLHGCPKCVEILLYYGANINI).

The sequence is that of Putative ankyrin repeat protein FPV216 from Fowlpox virus (strain NVSL) (FPV).